The following is a 392-amino-acid chain: Protein FAM185A (392 aa).

Residues 39–60 form a disordered region; the sequence is YSSGGSERWPGSETEVPPPGPG.

The sequence is that of Protein FAM185A (FAM185A) from Homo sapiens (Human).